We begin with the raw amino-acid sequence, 241 residues long: Xyloglucan-specific endo-beta-1,4-glucanase A (241 aa).

Residues Met-1–Ala-16 form the signal peptide. A glycan (N-linked (GlcNAc...) asparagine) is linked at Asn-47.

The protein belongs to the glycosyl hydrolase 12 (cellulase H) family.

It localises to the secreted. The enzyme catalyses xyloglucan + H2O = xyloglucan oligosaccharides.. In terms of biological role, catalyzes endohydrolysis of 1,4-beta-D-glucosidic linkages in xyloglucan with retention of the beta-configuration of the glycosyl residues. Specific for xyloglucan and does not hydrolyze other cell wall components. The protein is Xyloglucan-specific endo-beta-1,4-glucanase A (xgeA) of Aspergillus niger.